Reading from the N-terminus, the 301-residue chain is Hydroxymycolate synthase MmaA4 (301 aa).

Residues 42–43 (YS), 81–83 (GCG), 103–108 (TLSKNQ), 132–133 (WE), and Ile-145 contribute to the S-adenosyl-L-methionine site. The active site involves Cys-278.

Belongs to the CFA/CMAS family. Monomer.

Its pathway is lipid metabolism; mycolic acid biosynthesis. With respect to regulation, inhibited by S-adenosyl-N-decyl-aminoethyl (SADAE). Involved in the biosynthesis of hydroxymycolate, a common precursor of oxygenated mycolic acids (methoxy-mycolate and keto-mycolate). Probably transfers a methyl group from the S-adenosylmethionine (SAM) cofactor and, subsequently or simultaneously, a water molecule onto the double bound of ethylene substrates, leading to the formation of the hydroxylated product at the distal position. Involved in the activation of the antitubercular drug thiacetazone (TAC). This Mycobacterium tuberculosis (strain ATCC 25618 / H37Rv) protein is Hydroxymycolate synthase MmaA4 (mmaA4).